The primary structure comprises 206 residues: Probable GTP-binding protein EngB (206 aa).

The 188-residue stretch at 8–195 (RSDEVVLVGR…EDAVNSHFDA (188 aa)) folds into the EngB-type G domain. Residues 16-23 (GRSNVGKS), 41-45 (GVTRQ), 60-63 (DLPG), 140-143 (NKMD), and 175-177 (ITA) each bind GTP. The Mg(2+) site is built by S23 and T43.

Belongs to the TRAFAC class TrmE-Era-EngA-EngB-Septin-like GTPase superfamily. EngB GTPase family. The cofactor is Mg(2+).

Necessary for normal cell division and for the maintenance of normal septation. This Halobacterium salinarum (strain ATCC 29341 / DSM 671 / R1) protein is Probable GTP-binding protein EngB.